The chain runs to 361 residues: Methionine import ATP-binding protein MetN (361 aa).

The region spanning 22–257 is the ABC transporter domain; that stretch reads VRLIDVKRRF…PQTDITRSLL (236 aa). 54–61 contributes to the ATP binding site; it reads GRSGAGKS.

This sequence belongs to the ABC transporter superfamily. Methionine importer (TC 3.A.1.24) family. In terms of assembly, the complex is composed of two ATP-binding proteins (MetN), two transmembrane proteins (MetI) and a solute-binding protein (MetQ).

It is found in the cell inner membrane. The catalysed reaction is L-methionine(out) + ATP + H2O = L-methionine(in) + ADP + phosphate + H(+). It carries out the reaction D-methionine(out) + ATP + H2O = D-methionine(in) + ADP + phosphate + H(+). In terms of biological role, part of the ABC transporter complex MetNIQ involved in methionine import. Responsible for energy coupling to the transport system. This is Methionine import ATP-binding protein MetN from Rhizobium etli (strain ATCC 51251 / DSM 11541 / JCM 21823 / NBRC 15573 / CFN 42).